A 3343-amino-acid polypeptide reads, in one-letter code: Cadherin-3 (3343 aa).

Positions M1–Q26 are cleaved as a signal peptide. Residue N22 is glycosylated (N-linked (GlcNAc...) asparagine). The Extracellular segment spans residues F27 to T3228. 3 consecutive Cadherin domains span residues S28–F117, P118–F229, and P242–I330. N-linked (GlcNAc...) asparagine glycosylation is found at N149, N250, N288, N369, N467, and N612. A Cadherin 4 domain is found at I632–F738. N-linked (GlcNAc...) asparagine glycans are attached at residues N752, N806, N941, N966, N970, N985, N1042, N1335, N1425, N1429, N1557, N1563, N1597, N1624, N1695, and N1702. One can recognise a Cadherin 5 domain in the interval R1279–I1368. 3 consecutive Cadherin domains span residues D1545–F1648, A1676–F1756, and E1757–I1857. 2 N-linked (GlcNAc...) asparagine glycosylation sites follow: N1895 and N1900. Cadherin domains are found at residues T1954–F2045, D2046–R2145, and F2146–F2245. 19 N-linked (GlcNAc...) asparagine glycosylation sites follow: N2053, N2129, N2203, N2382, N2391, N2410, N2414, N2431, N2527, N2530, N2564, N2621, N2665, N2712, N2798, N2809, N2927, N2976, and N3045. A Laminin G-like domain is found at E3040–C3205. The cysteines at positions 3172 and 3205 are disulfide-linked. 2 N-linked (GlcNAc...) asparagine glycosylation sites follow: N3222 and N3225. The helical transmembrane segment at L3229 to I3250 threads the bilayer. Residues R3251–L3343 are Cytoplasmic-facing. Residues K3257 to P3277 are disordered.

In terms of tissue distribution, expressed in the anchor cell.

Its subcellular location is the cell membrane. The protein resides in the basolateral cell membrane. It localises to the cell junction. In terms of biological role, cell adhesion protein involved in the control of epithelial morphogenesis. Together with metalloproteinase zmp-1 and hemicentin him-4, plays a role in anchor cell (AC) invasion during postembryonic vulval development. The sequence is that of Cadherin-3 (cdh-3) from Caenorhabditis elegans.